The chain runs to 362 residues: Glutamate 5-kinase (362 aa).

K3 contacts ATP. The substrate site is built by S43, D128, and N140. Residues 160 to 161 and 202 to 208 contribute to the ATP site; these read TD and TGGMRTK. In terms of domain architecture, PUA spans 267 to 348; that stretch reads PGTILIDAGA…REIEPILGYS (82 aa).

The protein belongs to the glutamate 5-kinase family.

The protein resides in the cytoplasm. It carries out the reaction L-glutamate + ATP = L-glutamyl 5-phosphate + ADP. It participates in amino-acid biosynthesis; L-proline biosynthesis; L-glutamate 5-semialdehyde from L-glutamate: step 1/2. In terms of biological role, catalyzes the transfer of a phosphate group to glutamate to form L-glutamate 5-phosphate. This is Glutamate 5-kinase from Xanthomonas campestris pv. campestris (strain 8004).